The primary structure comprises 1200 residues: Chromosome partition protein Smc (1200 aa).

Residue 32–39 (PNGCGKSN) participates in ATP binding. Coiled coils occupy residues 171 to 219 (VTKY…AEKY) and 252 to 342 (LENL…MSEA). The region spanning 528 to 644 (QGIFGLVADV…QDVATARAWT (117 aa)) is the SMC hinge domain. Coiled coils occupy residues 679-706 (ALQK…ILTR) and 735-762 (LASQ…LEVE). Residues 763-795 (EGQLTQSHQALEHEEEASRGEVAHGQADREGRE) form a disordered region. The segment covering 772 to 795 (ALEHEEEASRGEVAHGQADREGRE) has biased composition (basic and acidic residues). The stretch at 1002–1039 (HAELSKRYDFLTAQKKDLQSSIEQLKEAIQRIDATSRE) forms a coiled coil.

This sequence belongs to the SMC family. Homodimer. Probably forms the Structural Maintenance of Chromosome (SMC) condensin-like complex with ScpA and ScpB.

The protein resides in the cytoplasm. In terms of biological role, a conditionally essential component of the chromosome segregation machinery. Required for chromosome condensation and partitioning. Important for positioning of ParB-parS complexes (ori of replication) and of the ter replication site, as well as for segration of the ParB-parS complex and thus chromosome segregation. May act via the formation of a condensin-like complex containing Smc, ScpA and ScpB that pulls DNA away from mid-cell into both cell halves. In Myxococcus xanthus (strain DK1622), this protein is Chromosome partition protein Smc.